We begin with the raw amino-acid sequence, 341 residues long: UDP-3-O-acylglucosamine N-acyltransferase (341 aa).

His236 serves as the catalytic Proton acceptor.

It belongs to the transferase hexapeptide repeat family. LpxD subfamily. As to quaternary structure, homotrimer.

It carries out the reaction a UDP-3-O-[(3R)-3-hydroxyacyl]-alpha-D-glucosamine + a (3R)-hydroxyacyl-[ACP] = a UDP-2-N,3-O-bis[(3R)-3-hydroxyacyl]-alpha-D-glucosamine + holo-[ACP] + H(+). It participates in bacterial outer membrane biogenesis; LPS lipid A biosynthesis. Catalyzes the N-acylation of UDP-3-O-acylglucosamine using 3-hydroxyacyl-ACP as the acyl donor. Is involved in the biosynthesis of lipid A, a phosphorylated glycolipid that anchors the lipopolysaccharide to the outer membrane of the cell. This chain is UDP-3-O-acylglucosamine N-acyltransferase, found in Lawsonia intracellularis (strain PHE/MN1-00).